The following is a 394-amino-acid chain: Cysteine desulfurase IscS (394 aa).

Residues 72–73 (GT), Asn-152, Gln-180, and 200–202 (SAH) each bind pyridoxal 5'-phosphate. At Lys-203 the chain carries N6-(pyridoxal phosphate)lysine. Residue Thr-238 participates in pyridoxal 5'-phosphate binding. Cys-326 (cysteine persulfide intermediate) is an active-site residue. Position 326 (Cys-326) interacts with [2Fe-2S] cluster.

It belongs to the class-V pyridoxal-phosphate-dependent aminotransferase family. NifS/IscS subfamily. As to quaternary structure, homodimer. Forms a heterotetramer with IscU, interacts with other sulfur acceptors. Pyridoxal 5'-phosphate serves as cofactor.

It is found in the cytoplasm. The catalysed reaction is (sulfur carrier)-H + L-cysteine = (sulfur carrier)-SH + L-alanine. It functions in the pathway cofactor biosynthesis; iron-sulfur cluster biosynthesis. Master enzyme that delivers sulfur to a number of partners involved in Fe-S cluster assembly, tRNA modification or cofactor biosynthesis. Catalyzes the removal of elemental sulfur atoms from cysteine to produce alanine. Functions as a sulfur delivery protein for Fe-S cluster synthesis onto IscU, an Fe-S scaffold assembly protein, as well as other S acceptor proteins. The sequence is that of Cysteine desulfurase IscS from Dictyoglomus turgidum (strain DSM 6724 / Z-1310).